We begin with the raw amino-acid sequence, 128 residues long: UPF0325 protein KPN78578_01770 (128 aa).

It belongs to the UPF0325 family.

The sequence is that of UPF0325 protein KPN78578_01770 from Klebsiella pneumoniae subsp. pneumoniae (strain ATCC 700721 / MGH 78578).